We begin with the raw amino-acid sequence, 330 residues long: Putative acetyltransferase ORF330 (330 aa).

Helical transmembrane passes span 29-49 (GFAS…LPLS), 50-70 (IFRP…FLLL), 90-110 (IYPL…YYFH), 118-138 (LFLH…SYVF), 163-183 (FLLA…IVTL), 190-210 (LLYF…IAYI), 225-245 (ISFL…NEFL), 252-272 (VVVY…PPKV), 273-293 (LSKV…WHLL), and 297-317 (LLGV…EFPL).

It is found in the host membrane. In Acidianus convivator (ATV), this protein is Putative acetyltransferase ORF330.